The primary structure comprises 130 residues: 3-aminoacrylate deaminase RutC (130 aa).

The protein belongs to the RutC family.

It carries out the reaction (Z)-3-aminoacrylate + H2O + H(+) = 3-oxopropanoate + NH4(+). Functionally, involved in pyrimidine catabolism. Catalyzes the deamination of 3-aminoacrylate to malonic semialdehyde, a reaction that can also occur spontaneously. RutC may facilitate the reaction and modulate the metabolic fitness, rather than catalyzing essential functions. This Klebsiella pneumoniae (strain 342) protein is 3-aminoacrylate deaminase RutC.